The chain runs to 471 residues: Putative ETHYLENE INSENSITIVE 3-like 4 protein (471 aa).

The segment at 280-316 (DLKISEDQDDQESSGSKRKSESMEPSKSVYTCQNSSC) is disordered. Positions 304-316 (PSKSVYTCQNSSC) are enriched in polar residues.

It belongs to the EIN3 family.

The protein localises to the nucleus. In terms of biological role, putative transcription factor that may be involved in the ethylene response pathway. The protein is Putative ETHYLENE INSENSITIVE 3-like 4 protein (EIL4) of Arabidopsis thaliana (Mouse-ear cress).